Reading from the N-terminus, the 303-residue chain is MTQQRTLKNTIRATGVGLHSGDKVYMTLRPAPVDHGIVFRRVDLEPVVEVPADAELVTETTLCTGLTCNGAKIQTVEHLMSALAGLGVDNVIVELSSAELPIMDGSSGPFVFLLQSAGIVEQNKAKRFIRIKQPVEVREGDKVARFEPYEGYKLGFTIEFNHPMIPAKQSRQEIEFSTSAYVKEISRARTFGFMRDLEYMRERNLGLGGSMDNAIVLDEFRVLNEDGLRYTNEFVRHKILDAIGDLYLAGGAILGAYEGFKSGHALNNKLVRALLADQAAWEWVSFPEGTEQSPVTYASPVYA.

Positions 78, 237, and 241 each coordinate Zn(2+). His264 (proton donor) is an active-site residue.

Belongs to the LpxC family. It depends on Zn(2+) as a cofactor.

The enzyme catalyses a UDP-3-O-[(3R)-3-hydroxyacyl]-N-acetyl-alpha-D-glucosamine + H2O = a UDP-3-O-[(3R)-3-hydroxyacyl]-alpha-D-glucosamine + acetate. Its pathway is glycolipid biosynthesis; lipid IV(A) biosynthesis; lipid IV(A) from (3R)-3-hydroxytetradecanoyl-[acyl-carrier-protein] and UDP-N-acetyl-alpha-D-glucosamine: step 2/6. Functionally, catalyzes the hydrolysis of UDP-3-O-myristoyl-N-acetylglucosamine to form UDP-3-O-myristoylglucosamine and acetate, the committed step in lipid A biosynthesis. The polypeptide is UDP-3-O-acyl-N-acetylglucosamine deacetylase (Xanthomonas campestris pv. campestris (strain B100)).